The chain runs to 707 residues: Choline transporter-like protein 4 (707 aa).

The Cytoplasmic segment spans residues 1 to 33 (MGGKQDQDKEAYGKPAKYDPSFRGPIRNRSCTD). The chain crosses the membrane as a helical span at residues 34–54 (IICCVLFFLFILGYIAVGILA). The Extracellular portion of the chain corresponds to 55–227 (WVYGDPKQVL…KIFEDFAQSW (173 aa)). N-linked (GlcNAc...) asparagine glycans are attached at residues Asn68, Asn185, and Asn196. The chain crosses the membrane as a helical span at residues 228 to 248 (YWILIALGLALVLSLLFILLL). Over 249 to 250 (RL) the chain is Cytoplasmic. A helical membrane pass occupies residues 251-271 (VAGPLVFVLIIGVLGVLAYGI). Residues 272 to 307 (YHCWEEYRVLRDKGASISQLGFTTNLSAYRNVQETW) are Extracellular-facing. N-linked (GlcNAc...) asparagine glycosylation is present at Asn296. A helical transmembrane segment spans residues 308–328 (LAALIILAVLEGVLLLMLIFL). Topologically, residues 329-356 (RQRICIAIALLKEASRAVGYIMSTMFYP) are cytoplasmic. A helical transmembrane segment spans residues 357-377 (LVTFALLLVCIAYWAIIALFL). Residues 378–452 (ATSGQPQYVF…AVLGLFWTIN (75 aa)) are Extracellular-facing. Asn391, Asn403, and Asn413 each carry an N-linked (GlcNAc...) asparagine glycan. A helical transmembrane segment spans residues 453 to 473 (WVLALGQCVLAGAFASFYWAF). Over 474 to 498 (HKPRDIPTFPLGSAFLRTLRYHTGS) the chain is Cytoplasmic. A helical transmembrane segment spans residues 499 to 519 (LAFGALILTLVQIARVILEYI). At 520-557 (DHKLRGAQNPLTRCILCCFKCCLWCLEKFIKFLNRNAY) the chain is on the extracellular side. Residues 558-578 (IMIAIYGKNFCVSAKNAFMLL) form a helical membrane-spanning segment. At 579-594 (MRNIVRVVVLDKVTDL) the chain is on the cytoplasmic side. A helical membrane pass occupies residues 595 to 615 (LLFFGKLLVVGGVGVLSFFFF). Topologically, residues 616-635 (TGRIPSLGKTFENPQLNYYW) are extracellular. The helical transmembrane segment at 636 to 656 (LPIMVSILGAYLIASGFFSVF) threads the bilayer. Residues 657–707 (GMCVDTLFLCFLEDLERNDGSADRPYYMSKSLLKILGKKNKGTPGDKKRKK) are Cytoplasmic-facing.

This sequence belongs to the CTL (choline transporter-like) family. In terms of processing, N-glycosylated; N-glycosylation of Asn-68 and Asn-391 is required for a proper thiamine pyrophosphate uptake.

It is found in the membrane. Its subcellular location is the apical cell membrane. The catalysed reaction is choline(out) + n H(+)(in) = choline(in) + n H(+)(out). It catalyses the reaction thiamine diphosphate(out) = thiamine diphosphate(in). Functionally, choline transporter that plays a role in the choline-acetylcholine system and is required to the efferent innervation of hair cells in the olivocochlear bundle for the maintenance of physiological function of outer hair cells and the protection of hair cells from acoustic injury. Also described as a thiamine pyrophosphate transporter in colon, may mediate the absorption of microbiota-generated thiamine pyrophosphate and contribute to host thiamine (vitamin B1) homeostasis. This chain is Choline transporter-like protein 4, found in Bos taurus (Bovine).